The sequence spans 438 residues: Putative formin-like protein 21a (438 aa).

The disordered stretch occupies residues 1–74 (MSPVEISGAD…RVLPRPPPPP (74 aa)). Residues 22–61 (PLPPPPPPPPPPMRRRAPLPPPPPPPMRRRAPLPPPPPPA) are compositionally biased toward pro residues. An FH2 domain is found at 124 to 438 (FPCPSKKKSS…SYGYFDQPWI (315 aa)).

Belongs to the formin-like family. Class-II subfamily.

The chain is Putative formin-like protein 21a (FH21A) from Arabidopsis thaliana (Mouse-ear cress).